The following is a 158-amino-acid chain: Transcription elongation factor GreA (158 aa).

Belongs to the GreA/GreB family.

Its function is as follows. Necessary for efficient RNA polymerase transcription elongation past template-encoded arresting sites. The arresting sites in DNA have the property of trapping a certain fraction of elongating RNA polymerases that pass through, resulting in locked ternary complexes. Cleavage of the nascent transcript by cleavage factors such as GreA or GreB allows the resumption of elongation from the new 3'terminus. GreA releases sequences of 2 to 3 nucleotides. The protein is Transcription elongation factor GreA of Macrococcus caseolyticus (strain JCSC5402) (Macrococcoides caseolyticum).